We begin with the raw amino-acid sequence, 61 residues long: Short neurotoxin 1 (61 aa).

4 disulfides stabilise this stretch: Cys3-Cys23, Cys17-Cys40, Cys42-Cys53, and Cys54-Cys59.

Belongs to the three-finger toxin family. Short-chain subfamily. Type I alpha-neurotoxin sub-subfamily. Expressed by the venom gland.

The protein localises to the secreted. In terms of biological role, binds to muscle nicotinic acetylcholine receptor (nAChR) and inhibit acetylcholine from binding to the receptor, thereby impairing neuromuscular transmission. This is Short neurotoxin 1 from Naja samarensis (Peters' cobra).